A 444-amino-acid polypeptide reads, in one-letter code: MDPLNLSWYDDDLERQNWSRPFNGSEGKADRPHYNYYAMLLTLLIFIIVFGNVLVCMAVSREKALQTTTNYLIVSLAVADLLVATLVMPWVVYLEVVGEWKFSRIHCDIFVTLDVMMCTASILNLCAISIDRYTAVAMPMLYNTRYSSKRRVTVMIAIVWVLSFTISCPLLFGLNNTDQNECIIANPAFVVYSSIVSFYVPFIVTLLVYIKIYIVLRKRRKRVNTKRSSRAFRANLKTPLKGNCTHPEDMKLCTVIMKSNGSFPVNRRRMDAARRAQELEMEMLSSTSPPERTRYSPIPPSHHQLTLPDPSHHGLHSNPDSPAKPEKNGHAKIVNPRIAKFFEIQTMPNGKTRTSLKTMSRRKLSQQKEKKATQMLAIVLGVFIICWLPFFITHILNIHCDCNIPPVLYSAFTWLGYVNSAVNPIIYTTFNIEFRKAFMKILHC.

Topologically, residues 1 to 37 (MDPLNLSWYDDDLERQNWSRPFNGSEGKADRPHYNYY) are extracellular. N-linked (GlcNAc...) asparagine glycans are attached at residues asparagine 5, asparagine 17, and asparagine 23. The chain crosses the membrane as a helical span at residues 38-60 (AMLLTLLIFIIVFGNVLVCMAVS). The Cytoplasmic portion of the chain corresponds to 61 to 70 (REKALQTTTN). A helical membrane pass occupies residues 71 to 93 (YLIVSLAVADLLVATLVMPWVVY). Over 94–108 (LEVVGEWKFSRIHCD) the chain is Extracellular. A disulfide bridge links cysteine 107 with cysteine 182. The helical transmembrane segment at 109-130 (IFVTLDVMMCTASILNLCAISI) threads the bilayer. Topologically, residues 131–151 (DRYTAVAMPMLYNTRYSSKRR) are cytoplasmic. Residues 152 to 172 (VTVMIAIVWVLSFTISCPLLF) form a helical membrane-spanning segment. The Extracellular portion of the chain corresponds to 173 to 188 (GLNNTDQNECIIANPA). A helical membrane pass occupies residues 189 to 213 (FVVYSSIVSFYVPFIVTLLVYIKIY). The tract at residues 211 to 374 (KIYIVLRKRR…SQQKEKKATQ (164 aa)) is interaction with PPP1R9B. Topologically, residues 214–374 (IVLRKRRKRV…SQQKEKKATQ (161 aa)) are cytoplasmic. The segment at 282-329 (EMLSSTSPPERTRYSPIPPSHHQLTLPDPSHHGLHSNPDSPAKPEKNG) is disordered. The chain crosses the membrane as a helical span at residues 375–396 (MLAIVLGVFIICWLPFFITHIL). Residues 397-410 (NIHCDCNIPPVLYS) lie on the Extracellular side of the membrane. The cysteines at positions 400 and 402 are disulfide-linked. A helical membrane pass occupies residues 411-432 (AFTWLGYVNSAVNPIIYTTFNI). Residues 433-444 (EFRKAFMKILHC) lie on the Cytoplasmic side of the membrane. A lipid anchor (S-palmitoyl cysteine) is attached at cysteine 444.

The protein belongs to the G-protein coupled receptor 1 family. Forms homo- and heterooligomers with DRD4. The interaction with DRD4 may modulate agonist-induced downstream signaling. Interacts with CADPS and CADPS2. Interacts with GPRASP1, PPP1R9B and CLIC6. Interacts with ARRB2. Interacts with HTR2A. Interacts with DRD1. Interacts with KCNA2. Post-translationally, palmitoylated. Palmitoylation which is required for proper localization to the plasma membrane and stability of the receptor could be carried on by ZDHHC4, ZDHHC3 and ZDHHC8. In terms of tissue distribution, expressed in the anterior lobe of the pituitary gland. Expressed ventral tegmental area of the midbrain and the pars compacta of the substantia nigra. Expressed seven times more than isoform short in the caudate nucleus. Expressed in the anterior lobe of the pituitary gland. Expressed in the caudate nucleus. Not expressed in the wider brain.

Its subcellular location is the cell membrane. The protein resides in the golgi apparatus membrane. In terms of biological role, dopamine receptor whose activity is mediated by G proteins which inhibit adenylyl cyclase. Positively regulates postnatal regression of retinal hyaloid vessels via suppression of VEGFR2/KDR activity, downstream of OPN5. This chain is D(2) dopamine receptor (Drd2), found in Rattus norvegicus (Rat).